The primary structure comprises 358 residues: Gibberellin 2-beta-dioxygenase 6 (358 aa).

The Fe2OG dioxygenase domain maps to 207–308 (DETTCFLRLN…RLSVAYFLCP (102 aa)). Tyrosine 218 is a binding site for 2-oxoglutarate. Fe cation contacts are provided by histidine 233, aspartate 235, and histidine 289. Residues arginine 299 and serine 301 each contribute to the 2-oxoglutarate site.

It belongs to the iron/ascorbate-dependent oxidoreductase family. GA2OX subfamily. L-ascorbate is required as a cofactor. It depends on Fe(2+) as a cofactor. Expressed in panicles. Expressed at low levels in young shoots, leaf blades and elongating internodes.

The protein resides in the cytoplasm. Its subcellular location is the nucleus. It catalyses the reaction gibberellin A1 + 2-oxoglutarate + O2 = gibberellin A8 + succinate + CO2. Its function is as follows. Catalyzes the 2-beta-hydroxylation of several biologically active gibberellins, leading to the homeostatic regulation of their endogenous level. Catabolism of gibberellins (GAs) plays a central role in plant development. In vitro, converts GA12 and GA53 to the corresponding 2-beta-hydroxylated products GA110 and GA97, respectively. In Oryza sativa subsp. japonica (Rice), this protein is Gibberellin 2-beta-dioxygenase 6.